Here is a 214-residue protein sequence, read N- to C-terminus: Uracil phosphoribosyltransferase (214 aa).

5-phospho-alpha-D-ribose 1-diphosphate-binding positions include arginine 81, arginine 106, and 133–141 (DPMLATGNS). Uracil-binding positions include isoleucine 196 and 201–203 (GDA). Aspartate 202 contacts 5-phospho-alpha-D-ribose 1-diphosphate.

It belongs to the UPRTase family. Mg(2+) serves as cofactor.

The catalysed reaction is UMP + diphosphate = 5-phospho-alpha-D-ribose 1-diphosphate + uracil. It participates in pyrimidine metabolism; UMP biosynthesis via salvage pathway; UMP from uracil: step 1/1. Its activity is regulated as follows. Allosterically activated by GTP. Its function is as follows. Catalyzes the conversion of uracil and 5-phospho-alpha-D-ribose 1-diphosphate (PRPP) to UMP and diphosphate. In Legionella pneumophila subsp. pneumophila (strain Philadelphia 1 / ATCC 33152 / DSM 7513), this protein is Uracil phosphoribosyltransferase.